Consider the following 343-residue polypeptide: Phosphatidylglycerol--prolipoprotein diacylglyceryl transferase 1 (343 aa).

4 helical membrane-spanning segments follow: residues 19–39, 54–74, 93–113, and 119–139; these read VPLRGYAFCIIIGVFVAVWLG, ADIAVWAVPFGLIGGRLYHVI, IWEGGLGIWGAIAFGAVGAWI, and GVPMPAYADAVAPGIALAQAI. Residue Arg-141 participates in a 1,2-diacyl-sn-glycero-3-phospho-(1'-sn-glycerol) binding. Transmembrane regions (helical) follow at residues 176–196, 202–224, and 238–258; these read HPTFLYESLWCIGVALLVIWA, LGHGRAFALYVAAYCAGRFWIEY, and LNNWTALFVFLLAVLYIVLSA. The disordered stretch occupies residues 269-343; that stretch reads EPGAETAAGD…TNGADSAKKG (75 aa). Basic and acidic residues predominate over residues 283 to 293; the sequence is ADKDVKGTKDA. Residues 314–324 are compositionally biased toward acidic residues; it reads APEDTSGADEA.

Belongs to the Lgt family.

It localises to the cell membrane. It catalyses the reaction L-cysteinyl-[prolipoprotein] + a 1,2-diacyl-sn-glycero-3-phospho-(1'-sn-glycerol) = an S-1,2-diacyl-sn-glyceryl-L-cysteinyl-[prolipoprotein] + sn-glycerol 1-phosphate + H(+). It participates in protein modification; lipoprotein biosynthesis (diacylglyceryl transfer). Functionally, catalyzes the transfer of the diacylglyceryl group from phosphatidylglycerol to the sulfhydryl group of the N-terminal cysteine of a prolipoprotein, the first step in the formation of mature lipoproteins. This chain is Phosphatidylglycerol--prolipoprotein diacylglyceryl transferase 1, found in Streptomyces coelicolor (strain ATCC BAA-471 / A3(2) / M145).